The following is a 450-amino-acid chain: 3-phosphoshikimate 1-carboxyvinyltransferase (450 aa).

K28, S29, and R33 together coordinate 3-phosphoshikimate. K28 contributes to the phosphoenolpyruvate binding site. Phosphoenolpyruvate contacts are provided by G100 and R128. 3-phosphoshikimate is bound by residues S173, Q175, D326, and K353. Q175 is a phosphoenolpyruvate binding site. D326 (proton acceptor) is an active-site residue. The phosphoenolpyruvate site is built by R357 and R402.

The protein belongs to the EPSP synthase family. In terms of assembly, monomer.

It localises to the cytoplasm. It catalyses the reaction 3-phosphoshikimate + phosphoenolpyruvate = 5-O-(1-carboxyvinyl)-3-phosphoshikimate + phosphate. It participates in metabolic intermediate biosynthesis; chorismate biosynthesis; chorismate from D-erythrose 4-phosphate and phosphoenolpyruvate: step 6/7. Its function is as follows. Catalyzes the transfer of the enolpyruvyl moiety of phosphoenolpyruvate (PEP) to the 5-hydroxyl of shikimate-3-phosphate (S3P) to produce enolpyruvyl shikimate-3-phosphate and inorganic phosphate. The protein is 3-phosphoshikimate 1-carboxyvinyltransferase of Brucella canis (strain ATCC 23365 / NCTC 10854 / RM-666).